A 75-amino-acid polypeptide reads, in one-letter code: Large ribosomal subunit protein bL31 (75 aa).

Residues C16, C18, C38, and C41 each contribute to the Zn(2+) site.

It belongs to the bacterial ribosomal protein bL31 family. Type A subfamily. Part of the 50S ribosomal subunit. It depends on Zn(2+) as a cofactor.

Binds the 23S rRNA. This is Large ribosomal subunit protein bL31 from Nocardioides sp. (strain ATCC BAA-499 / JS614).